The primary structure comprises 426 residues: Delta-aminolevulinic acid dehydratase, chloroplastic (426 aa).

The N-terminal 45 residues, M1–R45, are a transit peptide targeting the chloroplast. Residues G74–R107 form a disordered region. The Schiff-base intermediate with substrate role is filled by K293. R303 and K315 together coordinate 5-aminolevulinate. E331 contributes to the Mg(2+) binding site. K346 functions as the Schiff-base intermediate with substrate in the catalytic mechanism. Residues S372 and Y411 each contribute to the 5-aminolevulinate site.

The protein belongs to the ALAD family. As to quaternary structure, homooctamer. Requires Mg(2+) as cofactor.

It is found in the plastid. It localises to the chloroplast. It catalyses the reaction 2 5-aminolevulinate = porphobilinogen + 2 H2O + H(+). The protein operates within porphyrin-containing compound metabolism; protoporphyrin-IX biosynthesis; coproporphyrinogen-III from 5-aminolevulinate: step 1/4. Its function is as follows. Catalyzes an early step in the biosynthesis of tetrapyrroles. Binds two molecules of 5-aminolevulinate per subunit, each at a distinct site, and catalyzes their condensation to form porphobilinogen. The protein is Delta-aminolevulinic acid dehydratase, chloroplastic (HEMB) of Oryza sativa subsp. japonica (Rice).